The primary structure comprises 130 residues: Small ribosomal subunit protein uS8 (130 aa).

It belongs to the universal ribosomal protein uS8 family. As to quaternary structure, part of the 30S ribosomal subunit.

One of the primary rRNA binding proteins, it binds directly to 16S rRNA central domain where it helps coordinate assembly of the platform of the 30S subunit. In Pyrococcus abyssi (strain GE5 / Orsay), this protein is Small ribosomal subunit protein uS8.